Here is a 102-residue protein sequence, read N- to C-terminus: Large ribosomal subunit protein uL24 (102 aa).

Belongs to the universal ribosomal protein uL24 family. As to quaternary structure, part of the 50S ribosomal subunit.

Its function is as follows. One of two assembly initiator proteins, it binds directly to the 5'-end of the 23S rRNA, where it nucleates assembly of the 50S subunit. Functionally, one of the proteins that surrounds the polypeptide exit tunnel on the outside of the subunit. This is Large ribosomal subunit protein uL24 from Lysinibacillus sphaericus (strain C3-41).